We begin with the raw amino-acid sequence, 307 residues long: Protease HtpX homolog (307 aa).

2 helical membrane passes run 7-27 and 28-48; these read AILL…IGGA and SGAT…YWNS. His130 lines the Zn(2+) pocket. Residue Glu131 is part of the active site. His134 is a Zn(2+) binding site. The next 2 helical transmembrane spans lie at 145 to 165 and 171 to 191; these read ITAT…FFGG and GPGI…AMLV. Glu200 serves as a coordination point for Zn(2+). The disordered stretch occupies residues 277-307; it reads AGQSGGGLAPGGPPPDPSSPWNKGSRRGPWG.

Belongs to the peptidase M48B family. It depends on Zn(2+) as a cofactor.

It localises to the cell inner membrane. This Nitrobacter winogradskyi (strain ATCC 25391 / DSM 10237 / CIP 104748 / NCIMB 11846 / Nb-255) protein is Protease HtpX homolog.